Here is a 268-residue protein sequence, read N- to C-terminus: Ribosome maturation factor RimP (268 aa).

2 disordered regions span residues 1–41 and 223–268; these read MGSA…GRGG and LVEP…EMTR. Positions 32–41 are enriched in low complexity; that stretch reads PSGSARGRGG. Positions 248–257 are enriched in basic and acidic residues; sequence ESNDDGREAG.

Belongs to the RimP family.

It is found in the cytoplasm. In terms of biological role, required for maturation of 30S ribosomal subunits. In Frankia casuarinae (strain DSM 45818 / CECT 9043 / HFP020203 / CcI3), this protein is Ribosome maturation factor RimP.